Consider the following 1041-residue polypeptide: MELQKGKGTVAAAASGAAGGGGGGAGAGAPGGGRLLLSTSLDAKDELEERLERCMSIVTSMTAGVSEREANDALNAYVCKGPPQHEEICLGLFTLVLTEPAQAQKCYRDLALVSRDGMNIVLNKINQLLMEKYLKLQDTCRTQLVWLVRELVKSGVLGADGVCMTFMKQIAGGDVTAKNIWLAESVLDILTEQREWVLKSSILIAMAVYTYLRLIVDHHGTAQLQTLRQKEVDFCISLLRERFMECLMIGRDLVRLLQNVARIPEFELLWKDIIHNPQALSPQFTGILQLLQSRTSRKFLACRLTPDMETKLLFMTSRVRFGQQKRYQDWFQRQYLSTPDSQSLRCDLIRYICGVVHPSNEVLSSDILPRWAIIGWLLTTCTSNVAASNAKLALFYDWLFFSPEKDSIMNIEPAILVMHHSMKPHPAITATLLDFMCRIIPNFYPPLEGHVRQGVFSSLNHIVEKRVLAHLAPLFDNPKLDKELRSMLREKFPEFCSSPSPPVEVKIEEPVSMEMDNHLSDKDESCYDNAEAAFSDDEEDLNSKGKKREFRFHPIKETVVEEPVDVTPYLDQLDESLRDKVLQLQKGSDTEAQCEVMQEIVDQVLEEDFDSEQLSVLASCLQELFKAHFRGEVLPEEVTEESLEESVGKPLYLIFRNLCQMQEDNSSFSLLLDLLSELYQKQPKIGYHLLYYLRASKAAAGKMNLYESFAQATQLGDLHTCLMMDMKACQEDDVRLLCHLTPSIYTEFPDETLRSGELLNMIVAVIDSAQLQELVCHVMMGNLVMFRKDSVLNILIQSLDWETFEQYCAWQLFLAHNIPLETIIPILQHLKYKEHPEALSCLLLQLRREKPSEEMVKMVLSRPCHPDDQFTTSILRHWCMKHDELLAEHIKALLIKNNSLPRKRQSLRSSSSKLAQLTLEQILEHLDNLRLNLANTKQNFFSQTPILQALQHVQASCDEAHKMKFSDLFSLAEEYEDSSTKPPKSRRKAALSSPRSRKNATQPPNAEEESGSSSASEEEDTKPKPTKRKRKGSSAVGSDSD.

M1 bears the N-acetylmethionine mark. Phosphoserine is present on residues S500, S535, and S993. Residues Y975–D1041 form a disordered region. A compositionally biased stretch (acidic residues) spans A1006–D1020.

The protein belongs to the Integrator subunit 3 family. In terms of assembly, component of the Integrator complex, composed of core subunits INTS1, INTS2, INTS3, INTS4, INTS5, INTS6, INTS7, INTS8, INTS9/RC74, INTS10, INTS11/CPSF3L, INTS12, INTS13, INTS14 and INTS15. The core complex associates with protein phosphatase 2A subunits PPP2CA and PPP2R1A, to form the Integrator-PP2A (INTAC) complex. Component of the SOSS complex, composed of SOSS-B (SOSS-B1/NABP2 or SOSS-B2/NABP1), SOSS-A/INTS3 and SOSS-C/INIP. SOSS complexes containing SOSS-B1/NABP2 are more abundant than complexes containing SOSS-B2/NABP1. Interacts with SOSS-B1/NABP2, SOSS-B2/NABP1 and SOSS-C/INIP; the interaction is direct. Interacts with NBN/NBS1.

The protein localises to the nucleus. The protein resides in the cytoplasm. Its function is as follows. Component of the integrator complex, a multiprotein complex that terminates RNA polymerase II (Pol II) transcription in the promoter-proximal region of genes. The integrator complex provides a quality checkpoint during transcription elongation by driving premature transcription termination of transcripts that are unfavorably configured for transcriptional elongation: the complex terminates transcription by (1) catalyzing dephosphorylation of the C-terminal domain (CTD) of Pol II subunit POLR2A/RPB1 and SUPT5H/SPT5, (2) degrading the exiting nascent RNA transcript via endonuclease activity and (3) promoting the release of Pol II from bound DNA. The integrator complex is also involved in terminating the synthesis of non-coding Pol II transcripts, such as enhancer RNAs (eRNAs), small nuclear RNAs (snRNAs), telomerase RNAs and long non-coding RNAs (lncRNAs). Within the integrator complex, INTS3 is involved in the post-termination step: INTS3 binds INTS7 in the open conformation of integrator complex and prevents the rebinding of Pol II to the integrator after termination cycle. Mediates recruitment of cytoplasmic dynein to the nuclear envelope, probably as component of the integrator complex. Functionally, component of the SOSS complex, a multiprotein complex that functions downstream of the MRN complex to promote DNA repair and G2/M checkpoint. The SOSS complex associates with single-stranded DNA at DNA lesions and influences diverse endpoints in the cellular DNA damage response including cell-cycle checkpoint activation, recombinational repair and maintenance of genomic stability. The SOSS complex is required for efficient homologous recombination-dependent repair of double-strand breaks (DSBs) and ATM-dependent signaling pathways. In the SOSS complex, it is required for the assembly of the complex and for stabilization of the complex at DNA damage sites. The chain is Integrator complex subunit 3 (Ints3) from Mus musculus (Mouse).